The sequence spans 155 residues: Probable adenylyl-sulfate kinase (155 aa).

9-16 (GPSGAGKT) contacts ATP. Ser83 functions as the Phosphoserine intermediate in the catalytic mechanism. Positions 134–155 (LDGEYEEPENPEVVVDTDKNDR) are disordered.

It belongs to the APS kinase family.

The catalysed reaction is adenosine 5'-phosphosulfate + ATP = 3'-phosphoadenylyl sulfate + ADP + H(+). It functions in the pathway sulfur metabolism; hydrogen sulfide biosynthesis; sulfite from sulfate: step 2/3. Catalyzes the synthesis of activated sulfate. This is Probable adenylyl-sulfate kinase (cysC) from Archaeoglobus fulgidus (strain ATCC 49558 / DSM 4304 / JCM 9628 / NBRC 100126 / VC-16).